The following is an 89-amino-acid chain: Elongation factor 1-beta (89 aa).

The protein belongs to the EF-1-beta/EF-1-delta family.

In terms of biological role, promotes the exchange of GDP for GTP in EF-1-alpha/GDP, thus allowing the regeneration of EF-1-alpha/GTP that could then be used to form the ternary complex EF-1-alpha/GTP/AAtRNA. The protein is Elongation factor 1-beta of Methanococcus maripaludis (strain DSM 14266 / JCM 13030 / NBRC 101832 / S2 / LL).